The chain runs to 38 residues: Photosystem II reaction center protein L (38 aa).

A helical membrane pass occupies residues 17-37 (GLYWGLLLIFVLAVLFSSYFF).

Belongs to the PsbL family. In terms of assembly, PSII is composed of 1 copy each of membrane proteins PsbA, PsbB, PsbC, PsbD, PsbE, PsbF, PsbH, PsbI, PsbJ, PsbK, PsbL, PsbM, PsbT, PsbX, PsbY, PsbZ, Psb30/Ycf12, at least 3 peripheral proteins of the oxygen-evolving complex and a large number of cofactors. It forms dimeric complexes.

Its subcellular location is the plastid. It is found in the chloroplast thylakoid membrane. One of the components of the core complex of photosystem II (PSII). PSII is a light-driven water:plastoquinone oxidoreductase that uses light energy to abstract electrons from H(2)O, generating O(2) and a proton gradient subsequently used for ATP formation. It consists of a core antenna complex that captures photons, and an electron transfer chain that converts photonic excitation into a charge separation. This subunit is found at the monomer-monomer interface and is required for correct PSII assembly and/or dimerization. The polypeptide is Photosystem II reaction center protein L (Staurastrum punctulatum (Green alga)).